A 276-amino-acid chain; its full sequence is NADPH-dependent 7-cyano-7-deazaguanine reductase (276 aa).

A substrate-binding site is contributed by 83 to 85 (IES). Position 85 to 86 (85 to 86 (SK)) interacts with NADPH. C184 functions as the Thioimide intermediate in the catalytic mechanism. D191 serves as the catalytic Proton donor. A substrate-binding site is contributed by 223–224 (HE). Residue 252 to 253 (RG) participates in NADPH binding.

This sequence belongs to the GTP cyclohydrolase I family. QueF type 2 subfamily. In terms of assembly, homodimer.

It localises to the cytoplasm. The enzyme catalyses 7-aminomethyl-7-carbaguanine + 2 NADP(+) = 7-cyano-7-deazaguanine + 2 NADPH + 3 H(+). Its pathway is tRNA modification; tRNA-queuosine biosynthesis. Its function is as follows. Catalyzes the NADPH-dependent reduction of 7-cyano-7-deazaguanine (preQ0) to 7-aminomethyl-7-deazaguanine (preQ1). This Pseudomonas fluorescens (strain ATCC BAA-477 / NRRL B-23932 / Pf-5) protein is NADPH-dependent 7-cyano-7-deazaguanine reductase.